The primary structure comprises 258 residues: Acetylglutamate kinase (258 aa).

Substrate is bound by residues 44–45, Arg66, and Asn158; that span reads GG. ATP is bound by residues 181–186 and 209–211; these read DVSGIL and IIT.

It belongs to the acetylglutamate kinase family. ArgB subfamily. In terms of assembly, homodimer.

The protein resides in the cytoplasm. The catalysed reaction is N-acetyl-L-glutamate + ATP = N-acetyl-L-glutamyl 5-phosphate + ADP. It participates in amino-acid biosynthesis; L-arginine biosynthesis; N(2)-acetyl-L-ornithine from L-glutamate: step 2/4. Its function is as follows. Catalyzes the ATP-dependent phosphorylation of N-acetyl-L-glutamate. The chain is Acetylglutamate kinase from Escherichia coli O157:H7.